A 316-amino-acid chain; its full sequence is Sorting nexin-20 (316 aa).

Positions 1–57 (MASHKHPGSPGWTGPICQDMAGTTPKASAPRPDLPRPGPEDHLEAQGSPSSNSSMTT) are disordered. A Phosphoserine modification is found at Ser3. Positions 47–57 (GSPSSNSSMTT) are enriched in polar residues. In terms of domain architecture, PX spans 74-191 (VKLLFEIASA…DFLTRPELKE (118 aa)). Residues Arg116, Ser118, Lys143, and Arg157 each contribute to the a 1,2-diacyl-sn-glycero-3-phospho-(1D-myo-inositol-3-phosphate) site.

Belongs to the sorting nexin family. Interacts with SELPLG. Interaction with SELPLG is controversial.

Its subcellular location is the early endosome membrane. It is found in the cell membrane. The protein localises to the cytoplasm. It localises to the nucleus. In terms of biological role, may play a role in cellular vesicle trafficking. Has been proposed to function as a sorting protein that targets SELPLG into endosomes, but has no effect on SELPLG internalization from the cell surface, or on SELPLG-mediated cell-cell adhesion. In Bos taurus (Bovine), this protein is Sorting nexin-20 (SNX20).